Reading from the N-terminus, the 110-residue chain is DNA-binding protein PAE3044 (110 aa).

The protein belongs to the PDCD5 family.

The polypeptide is DNA-binding protein PAE3044 (Pyrobaculum aerophilum (strain ATCC 51768 / DSM 7523 / JCM 9630 / CIP 104966 / NBRC 100827 / IM2)).